The primary structure comprises 352 residues: MPYSADLDIRVTDSSLRDGSHAKRHQFTVEHVRSIVGALDAAGVPVIEVTHGDGLGGSSFNYGFSHTPEQELIKAAVETAEQAKIAFLMLPGLGVRSDIREAADNGASICRIATHCTEADISVQHFGLARDLGLETVGFLMMSHSQPPEVLAKQARIMADAGCQCVYVVDSAGALILNAVSDRVSALVAELGDDAQVGFHGHENLGLGVANSVLAVEAGALQIDGSTRRFGAGAGNTPVEAFAAVTEKLGIRTGIDTLKIIDAAEDVVRPIMDGDCLLDRLSLTMGYAGVYSSFLKHADSHASRYGVSGAEILIEAGRRKLVGGQEDQLIEIALGLADRKSAETAVAEKKSA.

Residues 9 to 261 (IRVTDSSLRD…RTGIDTLKII (253 aa)) enclose the Pyruvate carboxyltransferase domain. 17 to 18 (RD) is a binding site for substrate. D18 lines the Mn(2+) pocket. H21 serves as the catalytic Proton acceptor. 2 residues coordinate substrate: S171 and H200. Residues H200 and H202 each coordinate Mn(2+). Y291 lines the substrate pocket.

The protein belongs to the 4-hydroxy-2-oxovalerate aldolase family.

It catalyses the reaction (S)-4-hydroxy-2-oxopentanoate = acetaldehyde + pyruvate. The polypeptide is 4-hydroxy-2-oxovalerate aldolase 5 (Rhodococcus opacus (strain B4)).